Here is a 214-residue protein sequence, read N- to C-terminus: Probable transaldolase (214 aa).

The active-site Schiff-base intermediate with substrate is the lysine 83.

This sequence belongs to the transaldolase family. Type 3B subfamily.

It localises to the cytoplasm. The catalysed reaction is D-sedoheptulose 7-phosphate + D-glyceraldehyde 3-phosphate = D-erythrose 4-phosphate + beta-D-fructose 6-phosphate. It participates in carbohydrate degradation; pentose phosphate pathway; D-glyceraldehyde 3-phosphate and beta-D-fructose 6-phosphate from D-ribose 5-phosphate and D-xylulose 5-phosphate (non-oxidative stage): step 2/3. In terms of biological role, transaldolase is important for the balance of metabolites in the pentose-phosphate pathway. The protein is Probable transaldolase of Leptospira interrogans serogroup Icterohaemorrhagiae serovar copenhageni (strain Fiocruz L1-130).